A 780-amino-acid chain; its full sequence is Aconitate hydratase, mitochondrial (780 aa).

Residues 1–27 (MAPYSLLVTRLQKALGVRQYHVASVLC) constitute a mitochondrion transit peptide. Lysine 31 is modified (N6-succinyllysine). Lysine 50 is modified (N6-acetyllysine; alternate). N6-succinyllysine; alternate is present on lysine 50. Position 99 (glutamine 99) interacts with substrate. 2 positions are modified to N6-acetyllysine; alternate: lysine 138 and lysine 144. 2 positions are modified to N6-succinyllysine; alternate: lysine 138 and lysine 144. 192-194 (DSH) is a binding site for substrate. Lysine 233 carries the N6-acetyllysine; alternate modification. Lysine 233 carries the post-translational modification N6-succinyllysine; alternate. Cysteine 385 is a binding site for [4Fe-4S] cluster. Lysine 411 is modified (N6-succinyllysine). [4Fe-4S] cluster contacts are provided by cysteine 448 and cysteine 451. 2 residues coordinate substrate: arginine 474 and arginine 479. Residues 528–537 (DADELPKGEF) are compositionally biased toward basic and acidic residues. The disordered stretch occupies residues 528-560 (DADELPKGEFDPGQDTYQHPPKDSSGQHVDVSP). At lysine 549 the chain carries N6-succinyllysine. The segment covering 551–560 (SSGQHVDVSP) has biased composition (polar residues). Position 559 is a phosphoserine (serine 559). At lysine 573 the chain carries N6-acetyllysine; alternate. Lysine 573 is subject to N6-succinyllysine; alternate. Residues lysine 577 and lysine 591 each carry the N6-succinyllysine modification. Lysine 605 carries the N6-acetyllysine; alternate modification. Lysine 605 carries the post-translational modification N6-succinyllysine; alternate. Arginine 607 contributes to the substrate binding site. Lysine 628 carries the post-translational modification N6-succinyllysine. Serine 670 carries the phosphoserine modification. 670–671 (SR) contributes to the substrate binding site. Lysine 689 is subject to N6-succinyllysine. An N6-acetyllysine; alternate mark is found at lysine 723 and lysine 730. An N6-succinyllysine; alternate mark is found at lysine 723 and lysine 730. An N6-acetyllysine mark is found at lysine 736, lysine 739, and lysine 743.

It belongs to the aconitase/IPM isomerase family. Monomer. It depends on [4Fe-4S] cluster as a cofactor. Post-translationally, forms covalent cross-links mediated by transglutaminase TGM2, between a glutamine and the epsilon-amino group of a lysine residue, forming homopolymers and heteropolymers.

It is found in the mitochondrion. It carries out the reaction citrate = D-threo-isocitrate. Its pathway is carbohydrate metabolism; tricarboxylic acid cycle; isocitrate from oxaloacetate: step 2/2. Functionally, catalyzes the isomerization of citrate to isocitrate via cis-aconitate. This Homo sapiens (Human) protein is Aconitate hydratase, mitochondrial (ACO2).